Consider the following 268-residue polypeptide: 4-pyridoxolactonase (268 aa).

Zn(2+) is bound by residues His96, His98, Asp100, His101, His185, Asp207, and His252. The active-site Proton donor/acceptor is Asp100.

It belongs to the metallo-beta-lactamase superfamily. Homodimer. It depends on Zn(2+) as a cofactor.

The enzyme catalyses 4-pyridoxolactone + H2O = 4-pyridoxate + H(+). It functions in the pathway cofactor degradation; B6 vitamer degradation; 4-pyridoxate from pyridoxal: step 2/2. Its activity is regulated as follows. Inhibited by Hg(2+). Functionally, involved in the degradation of pyridoxine or pyridoxamine (free, phosphate-unbound, forms of vitamin B6). Hydrolyzes 4-pyridoxolactone to 4-pyridoxic acid. Has lower activity toward N-hexanoyl-D,L-homoserine lactone, but is not active toward 5-pyridoxolactone and gamma-butyrolactone. This chain is 4-pyridoxolactonase, found in Mesorhizobium japonicum (strain LMG 29417 / CECT 9101 / MAFF 303099) (Mesorhizobium loti (strain MAFF 303099)).